The primary structure comprises 376 residues: Acetate kinase (376 aa).

Residue Asn-7 participates in Mg(2+) binding. Position 14 (Lys-14) interacts with ATP. Arg-71 provides a ligand contact to substrate. Asp-128 serves as the catalytic Proton donor/acceptor. ATP contacts are provided by residues 188 to 192 (HLGNG), 262 to 264 (DFR), and 310 to 314 (GVGEN). Position 364 (Glu-364) interacts with Mg(2+).

It belongs to the acetokinase family. As to quaternary structure, homodimer. It depends on Mg(2+) as a cofactor. Requires Mn(2+) as cofactor.

It localises to the cytoplasm. It carries out the reaction acetate + ATP = acetyl phosphate + ADP. The protein operates within metabolic intermediate biosynthesis; acetyl-CoA biosynthesis; acetyl-CoA from acetate: step 1/2. Functionally, catalyzes the formation of acetyl phosphate from acetate and ATP. Can also catalyze the reverse reaction. The polypeptide is Acetate kinase (Mycolicibacterium smegmatis (strain ATCC 700084 / mc(2)155) (Mycobacterium smegmatis)).